The sequence spans 310 residues: Upstream stimulatory factor 1 (310 aa).

Polar residues predominate over residues 1 to 17 (MKGQQKTAETEEGTVQI). Disordered stretches follow at residues 1-26 (MKGQ…ATGE) and 171-209 (QGGS…EVER). Basic and acidic residues predominate over residues 190–209 (EAPRTTRDEKRRAQHNEVER). Residues 199-254 (KRRAQHNEVERRRRDKINNWIVQLSKIIPDCSMESTKSGQSKGGILSKACDYIQEL) enclose the bHLH domain. The interval 271–292 (LQLDNDVLRQQVEDLKNKNLLL) is leucine-zipper. K306 participates in a covalent cross-link: Glycyl lysine isopeptide (Lys-Gly) (interchain with G-Cter in SUMO2).

In terms of assembly, efficient DNA binding requires dimerization with another bHLH protein. Binds DNA as a homodimer or a heterodimer (USF1/USF2).

The protein localises to the nucleus. Functionally, transcription factor that binds to a symmetrical DNA sequence (E-boxes) (5'-CACGTG-3') that is found in a variety of viral and cellular promoters. In Mus musculus (Mouse), this protein is Upstream stimulatory factor 1 (Usf1).